The sequence spans 832 residues: Cation/H(+) antiporter 21 (832 aa).

Transmembrane regions (helical) follow at residues 33–55 (ISAA…RILY), 61–81 (LCLP…PTVL), 99–119 (LLET…GLGL), 132–152 (VIIA…LYYL), 161–181 (ILAG…PDLA), 200–220 (CAAV…MAIF), 236–256 (STIA…AWIF), 278–298 (IICS…AFLF), 319–339 (FLSG…ADIG), 352–372 (VVTS…SIFL), 379–399 (GLAI…ILNA), and 413–433 (HLTL…AIAY). The span at 792 to 802 (RQTAENNNQEP) shows a compositional bias: polar residues. Residues 792 to 832 (RQTAENNNQEPVQGKAKTDHEATPFMEDEDDEVEHQYSMRR) are disordered.

The protein belongs to the monovalent cation:proton antiporter 2 (CPA2) transporter (TC 2.A.37) family. CHX (TC 2.A.37.4) subfamily. In terms of tissue distribution, specifically expressed in root endodermal cells. Expressed in seedlings, roots, leaves, flowers, flower buds and pollen.

The protein localises to the cell membrane. In terms of biological role, operates as a Na(+)/H(+) antiporter that plays a role in regulation of xylem Na(+) concentration and, consequently, Na(+) accumulation in the leaf. Required for pollen tube guidance, but not for normal pollen development. May also be involved in the development or function of the female gametophyte. The protein is Cation/H(+) antiporter 21 (CHX21) of Arabidopsis thaliana (Mouse-ear cress).